A 195-amino-acid chain; its full sequence is Protein RD3 (195 aa).

Positions 22-54 (AEMVLETLMMELAGQMREVERQQRERRSAVRKI) form a coiled coil. Residues 168–177 (TISEDVERDA) show a composition bias toward basic and acidic residues. Residues 168–195 (TISEDVERDAPPPPRTWSMPEFRAPQAD) form a disordered region.

Monomer. Interacts with GUCY2E; promotes the exit of GUCY2E from the endoplasmic reticulum and its trafficking to the photoreceptor outer segments. The interaction with GUCY2E negatively regulates its activity. Interacts with GUCY2F; promotes the exit of GUCY2F from the endoplasmic reticulum and its trafficking to the photoreceptor outer segments. The interaction with GUCY2F negatively regulates its activity. Interacts with GUK1; up-regulates GUK1 activity. Expressed in the retina and in particular in the inner nuclear layer, in rod and cone outer segments, in the outer nuclear layer, in the outer plexiform layer and in the ganglion cell layer.

It is found in the cell projection. The protein resides in the cilium. Its subcellular location is the photoreceptor outer segment. The protein localises to the photoreceptor inner segment. It localises to the endosome. It is found in the nucleus. The protein resides in the cytoplasm. Its subcellular location is the perinuclear region. Its function is as follows. Plays a critical role in the regulation of enzymes involved in nucleotide cycle in photoreceptors. Inhibits the basal catalytic activity and the GCAP-stimulated activity of GUCY2E and GUCY2F, two retinal guanylyl cyclases involved in the production of cGMP in photoreceptors. Involved in the transport of GUCY2E and GUCY2F to their target sites in the photoreceptor outer segment. Up-regulates the activity of GUK1, a kinase that also plays an essential role for recycling GMP and indirectly, cGMP. Plays an important role for the survival of rods and cones in the retina. The sequence is that of Protein RD3 (Rd3) from Mus musculus (Mouse).